The chain runs to 272 residues: Imidazole glycerol phosphate synthase subunit HisF (272 aa).

Residues Asp-12 and Asp-131 contribute to the active site.

The protein belongs to the HisA/HisF family. Heterodimer of HisH and HisF.

It localises to the cytoplasm. It catalyses the reaction 5-[(5-phospho-1-deoxy-D-ribulos-1-ylimino)methylamino]-1-(5-phospho-beta-D-ribosyl)imidazole-4-carboxamide + L-glutamine = D-erythro-1-(imidazol-4-yl)glycerol 3-phosphate + 5-amino-1-(5-phospho-beta-D-ribosyl)imidazole-4-carboxamide + L-glutamate + H(+). It participates in amino-acid biosynthesis; L-histidine biosynthesis; L-histidine from 5-phospho-alpha-D-ribose 1-diphosphate: step 5/9. Its function is as follows. IGPS catalyzes the conversion of PRFAR and glutamine to IGP, AICAR and glutamate. The HisF subunit catalyzes the cyclization activity that produces IGP and AICAR from PRFAR using the ammonia provided by the HisH subunit. The sequence is that of Imidazole glycerol phosphate synthase subunit HisF from Methanopyrus kandleri (strain AV19 / DSM 6324 / JCM 9639 / NBRC 100938).